Reading from the N-terminus, the 602-residue chain is Aspartate--tRNA(Asp/Asn) ligase (602 aa).

Position 175 (Glu175) interacts with L-aspartate. An aspartate region spans residues 199–202; it reads QIFK. Arg221 contacts L-aspartate. Residues 221-223 and Gln230 contribute to the ATP site; that span reads RDE. Residue His458 participates in L-aspartate binding. Glu492 lines the ATP pocket. L-aspartate is bound at residue Arg499. ATP is bound at residue 544–547; the sequence is GLDR.

This sequence belongs to the class-II aminoacyl-tRNA synthetase family. Type 1 subfamily. As to quaternary structure, homodimer.

Its subcellular location is the cytoplasm. It carries out the reaction tRNA(Asx) + L-aspartate + ATP = L-aspartyl-tRNA(Asx) + AMP + diphosphate. In terms of biological role, aspartyl-tRNA synthetase with relaxed tRNA specificity since it is able to aspartylate not only its cognate tRNA(Asp) but also tRNA(Asn). Reaction proceeds in two steps: L-aspartate is first activated by ATP to form Asp-AMP and then transferred to the acceptor end of tRNA(Asp/Asn). This Cupriavidus pinatubonensis (strain JMP 134 / LMG 1197) (Cupriavidus necator (strain JMP 134)) protein is Aspartate--tRNA(Asp/Asn) ligase.